The primary structure comprises 675 residues: Acyl-coenzyme A oxidase 3, peroxisomal (675 aa).

Residues 1–34 (MSDNRALRRAHVLANHILQSNPPSSNPSLSRELC) constitute a peroxisome transit peptide. 442–457 (AVGGQGVKTENLVGQL) is a binding site for FAD.

It belongs to the acyl-CoA oxidase family. The cofactor is FAD. In terms of tissue distribution, most abundant in flowers and senescing rosette leaves. Lower expression in hypocotyls, stems, young rosette leaves, cotyledons, cauline leaves and root tip of young seedlings.

It is found in the peroxisome. The enzyme catalyses a 2,3-saturated acyl-CoA + O2 = a (2E)-enoyl-CoA + H2O2. It functions in the pathway lipid metabolism; peroxisomal fatty acid beta-oxidation. In terms of biological role, catalyzes the desaturation of medium-chain acyl-CoAs to 2-trans-enoyl-CoAs. Active on C8:0- to C14:0-CoA with a maximal activity on C12:0-CoA. The protein is Acyl-coenzyme A oxidase 3, peroxisomal (ACX3) of Arabidopsis thaliana (Mouse-ear cress).